We begin with the raw amino-acid sequence, 281 residues long: HTH-type transcriptional activator RhaR (281 aa).

The HTH araC/xylS-type domain maps to D178–R276. 2 DNA-binding regions (H-T-H motif) span residues E195–T216 and I243–I266.

In terms of assembly, binds DNA as a dimer.

Its subcellular location is the cytoplasm. Activates expression of the rhaSR operon in response to L-rhamnose. The sequence is that of HTH-type transcriptional activator RhaR from Klebsiella pneumoniae subsp. pneumoniae (strain ATCC 700721 / MGH 78578).